Here is a 449-residue protein sequence, read N- to C-terminus: TNF receptor-associated factor family protein DDB_G0272340 (449 aa).

The RING-type; degenerate zinc finger occupies 33-76 (CPICEECIMDVNKCEALQCKEGHVHCRLCWMKSLESKKECMTCR). 2 consecutive TRAF-type zinc fingers follow at residues 133–187 (GHIK…IDDS) and 189–251 (VHYS…SELS). Positions 263–309 (MEATIDQHICKFEKSEKEYKKLELEYNRLKDDFKILQSELKVIRELK) form a coiled coil. Residues 311–437 (NYQNKWVITN…QNSVTLNINI (127 aa)) enclose the MATH domain.

The protein belongs to the TNF receptor-associated factor family. A subfamily.

The protein localises to the cytoplasm. In terms of biological role, probable adapter protein and signal transducer that links members of the tumor necrosis factor receptor family to different signaling pathways by association with the receptor cytoplasmic domain and kinases. The chain is TNF receptor-associated factor family protein DDB_G0272340 from Dictyostelium discoideum (Social amoeba).